Reading from the N-terminus, the 213-residue chain is MSADIRFDSLKTIVPAVSRETADRLIAFEDLFRKWSKAINLASPSTLADLWNRHILDSAQLFPLAKEATRWLDIGSGGGFPGIVTACFLAERSGGCIDLVESAGKKAAFLRTAAGHLHVPARVHSARIESMWEKIETPQVVTARALASLGDLFTLAEPWLSDGAKALFQKGRDYQREIDESRVGWSFDLVKHPSAIDQASVILEISNLRRKTD.

S-adenosyl-L-methionine contacts are provided by residues Gly75, Phe80, Ile128–Glu129, and Arg144.

The protein belongs to the methyltransferase superfamily. RNA methyltransferase RsmG family.

Its subcellular location is the cytoplasm. The catalysed reaction is guanosine(527) in 16S rRNA + S-adenosyl-L-methionine = N(7)-methylguanosine(527) in 16S rRNA + S-adenosyl-L-homocysteine. Its function is as follows. Specifically methylates the N7 position of guanine in position 527 of 16S rRNA. The sequence is that of Ribosomal RNA small subunit methyltransferase G from Brucella abortus (strain S19).